Consider the following 219-residue polypeptide: Lipoprotein-releasing system ATP-binding protein LolD (219 aa).

One can recognise an ABC transporter domain in the interval 3–219 (IEARNIRKSF…HMRDGLLFSE (217 aa)). 35 to 42 (GTSGAGKT) contacts ATP.

The protein belongs to the ABC transporter superfamily. Lipoprotein translocase (TC 3.A.1.125) family. As to quaternary structure, the complex is composed of two ATP-binding proteins (LolD) and two transmembrane proteins (LolC and LolE).

Its subcellular location is the cell inner membrane. Part of the ABC transporter complex LolCDE involved in the translocation of mature outer membrane-directed lipoproteins, from the inner membrane to the periplasmic chaperone, LolA. Responsible for the formation of the LolA-lipoprotein complex in an ATP-dependent manner. This chain is Lipoprotein-releasing system ATP-binding protein LolD, found in Porphyromonas gingivalis (strain ATCC BAA-308 / W83).